Consider the following 326-residue polypeptide: Phospho-N-acetylmuramoyl-pentapeptide-transferase (326 aa).

10 helical membrane-spanning segments follow: residues 5–25 (GLLI…PIFI), 51–71 (TPTM…LIMA), 82–102 (VWLL…DDFI), 122–142 (IIIA…TVIY), 148–168 (LQFD…VGAS), 180–200 (LLAG…WYGI), 204–224 (VVAV…VFNA), 229–249 (VFMG…ISIL), 252–272 (LEIL…SVII), and 304–324 (VVTT…YIEV).

Belongs to the glycosyltransferase 4 family. MraY subfamily. It depends on Mg(2+) as a cofactor.

It is found in the cell membrane. The catalysed reaction is UDP-N-acetyl-alpha-D-muramoyl-L-alanyl-gamma-D-glutamyl-meso-2,6-diaminopimeloyl-D-alanyl-D-alanine + di-trans,octa-cis-undecaprenyl phosphate = di-trans,octa-cis-undecaprenyl diphospho-N-acetyl-alpha-D-muramoyl-L-alanyl-D-glutamyl-meso-2,6-diaminopimeloyl-D-alanyl-D-alanine + UMP. It participates in cell wall biogenesis; peptidoglycan biosynthesis. Functionally, catalyzes the initial step of the lipid cycle reactions in the biosynthesis of the cell wall peptidoglycan: transfers peptidoglycan precursor phospho-MurNAc-pentapeptide from UDP-MurNAc-pentapeptide onto the lipid carrier undecaprenyl phosphate, yielding undecaprenyl-pyrophosphoryl-MurNAc-pentapeptide, known as lipid I. In Oceanobacillus iheyensis (strain DSM 14371 / CIP 107618 / JCM 11309 / KCTC 3954 / HTE831), this protein is Phospho-N-acetylmuramoyl-pentapeptide-transferase.